A 463-amino-acid chain; its full sequence is Serine carboxypeptidase-like 32 (463 aa).

A signal peptide spans 1 to 22 (MMNISNVSIALYLCTLFAFVSS). 3 disulfides stabilise this stretch: Cys-86–Cys-345, Cys-249–Cys-262, and Cys-286–Cys-313. Residue Asn-137 is glycosylated (N-linked (GlcNAc...) asparagine). Residue Ser-179 is part of the active site. N-linked (GlcNAc...) asparagine glycans are attached at residues Asn-201 and Asn-250. N-linked (GlcNAc...) asparagine glycosylation is found at Asn-341 and Asn-354. Residues Asp-384 and His-436 contribute to the active site.

The protein belongs to the peptidase S10 family. As to expression, expressed in flowers.

The protein localises to the secreted. Its function is as follows. Probable carboxypeptidase. The chain is Serine carboxypeptidase-like 32 (SCPL32) from Arabidopsis thaliana (Mouse-ear cress).